Here is a 330-residue protein sequence, read N- to C-terminus: B-cell receptor CD22 (330 aa).

The N-terminal stretch at 1 to 17 (MHLLGPWLLLLEYLAFS) is a signal peptide. Positions 18–136 (DSSKWAFEHP…MERIHLNVSE (119 aa)) constitute an Ig-like V-type domain. The Extracellular segment spans residues 18–330 (DSSKWAFEHP…VFLQVQYAPE (313 aa)). 3 cysteine pairs are disulfide-bonded: C37-C165, C42-C100, and C159-C217. N-linked (GlcNAc...) asparagine glycans are attached at residues N65, N99, and N110. R118 lines the N-acetylneuraminate pocket. Residues N133, N162, N187, and N229 are each glycosylated (N-linked (GlcNAc...) asparagine). 2 consecutive Ig-like C2-type domains span residues 141–233 (PHIQ…DTVQ) and 240–324 (PKLK…VFLQ). A disulfide bridge connects residues C263 and C307.

This sequence belongs to the immunoglobulin superfamily. SIGLEC (sialic acid binding Ig-like lectin) family. In terms of assembly, predominantly monomer of isoform CD22-beta. Also found as heterodimer of isoform CD22-beta and a shorter isoform. Interacts with PTPN6/SHP-1, LYN, SYK, PIK3R1/PIK3R2 and PLCG1 upon phosphorylation. Interacts with GRB2, INPP5D and SHC1 upon phosphorylation. May form a complex with INPP5D/SHIP, GRB2 and SHC1.

It is found in the cell membrane. Functionally, most highly expressed siglec (sialic acid-binding immunoglobulin-like lectin) on B-cells that plays a role in various aspects of B-cell biology including differentiation, antigen presentation, and trafficking to bone marrow. Binds to alpha 2,6-linked sialic acid residues of surface molecules such as CD22 itself, CD45 and IgM in a cis configuration. Can also bind to ligands on other cells as an adhesion molecule in a trans configuration. Acts as an inhibitory coreceptor on the surface of B-cells and inhibits B-cell receptor induced signaling, characterized by inhibition of the calcium mobilization and cellular activation. Mechanistically, the immunoreceptor tyrosine-based inhibitory motif domain is phosphorylated by the Src kinase LYN, which in turn leads to the recruitment of the protein tyrosine phosphatase 1/PTPN6, leading to the negative regulation of BCR signaling. If this negative signaling from is of sufficient strength, apoptosis of the B-cell can be induced. The chain is B-cell receptor CD22 from Pongo pygmaeus (Bornean orangutan).